A 406-amino-acid chain; its full sequence is uncharacterized protein (406 aa).

The segment covering 136-153 has biased composition (polar residues); sequence SQKNWGSEKNWNSPSQGP. Residues 136-157 are disordered; that stretch reads SQKNWGSEKNWNSPSQGPASRE.

This is an uncharacterized protein from Rattus norvegicus (Rat).